The primary structure comprises 256 residues: NifU-like protein, mitochondrial (256 aa).

Positions 196-199 (CTSC) match the CxxC motif motif.

The protein belongs to the NifU family. In terms of assembly, homodimer; in absence of BOL3, probably bridged by an iron-sulfure cluster. Interacts with BOL3. Interacts with apo-target proteins, such as ACO1, LYS4, ACO2 and SDH2.

Its subcellular location is the mitochondrion matrix. In terms of biological role, involved in iron homeostasis within the mitochondrion where it is involved in the assembly of iron-sulfur proteins. Together with BOL3, required during the last step of iron-sulfur protein assembly when the iron-sulfur cluster is inserted into the target protein. Required for protecting iron sulfur clusters from oxidative damage. The sequence is that of NifU-like protein, mitochondrial (NFU1) from Saccharomyces cerevisiae (strain ATCC 204508 / S288c) (Baker's yeast).